A 424-amino-acid polypeptide reads, in one-letter code: Histidine--tRNA ligase (424 aa).

The protein belongs to the class-II aminoacyl-tRNA synthetase family. In terms of assembly, homodimer.

It localises to the cytoplasm. It carries out the reaction tRNA(His) + L-histidine + ATP = L-histidyl-tRNA(His) + AMP + diphosphate + H(+). The polypeptide is Histidine--tRNA ligase (Shewanella halifaxensis (strain HAW-EB4)).